Consider the following 496-residue polypeptide: MKMDSAVSEEAFERLTAKLKARVGGEIYSSWFGRLKLDDISKSIVRLSVPTAFLRSWINNHYSELLTELWQEENPQILKVEVVVRGVSRVVRSAAPAETCDNAEAKPAVTPREKMVFPVGQSFGGQSLGEKRGSAVVAESAAATDAVLGSPLDPRYTFDTFVDGASNRVALAAARTIAEAGSSAVRFNPLFIHASVGLGKTHLLQAIAAAALQRQEKARVVYLTAEYFMWRFATAIRDNNALSFKEQLRDIDLLVIDDMQFLQGKSIQHEFCHLLNTLLDSAKQVVVAADRAPSELESLDVRVRSRLQGGVALEVAAPDYEMRLEMLRRRLASAQCEDASLDIGEEILAHVARTVTGSGRELEGAFNQLLFRQSFEPNISIDRVDELLGHLTRAGEPKRIRIEEIQRIVARHYNVSKQDLLSNRRTRTIVKPRQVAMYLAKMMTPRSLPEIGRRFGGRDHTTVLHAVRKIEDLVGADTKLAQELELLKRLINDQAA.

Positions 1 to 76 are domain I, interacts with DnaA modulators; sequence MKMDSAVSEE…TELWQEENPQ (76 aa). The interval 76-150 is domain II; it reads QILKVEVVVR…AAATDAVLGS (75 aa). Positions 151–373 are domain III, AAA+ region; it reads PLDPRYTFDT…GAFNQLLFRQ (223 aa). ATP is bound by residues G197, G199, K200, and T201. The domain IV, binds dsDNA stretch occupies residues 374-496; the sequence is SFEPNISIDR…LKRLINDQAA (123 aa).

It belongs to the DnaA family. In terms of assembly, oligomerizes as a right-handed, spiral filament on DNA at oriC.

It localises to the cytoplasm. Plays an essential role in the initiation and regulation of chromosomal replication. ATP-DnaA binds to the origin of replication (oriC) to initiate formation of the DNA replication initiation complex once per cell cycle. Binds the DnaA box (a 9 base pair repeat at the origin) and separates the double-stranded (ds)DNA. Forms a right-handed helical filament on oriC DNA; dsDNA binds to the exterior of the filament while single-stranded (ss)DNA is stabiized in the filament's interior. The ATP-DnaA-oriC complex binds and stabilizes one strand of the AT-rich DNA unwinding element (DUE), permitting loading of DNA polymerase. After initiation quickly degrades to an ADP-DnaA complex that is not apt for DNA replication. Binds acidic phospholipids. The protein is Chromosomal replication initiator protein DnaA of Brucella suis biovar 1 (strain 1330).